The primary structure comprises 577 residues: Efflux pump notK' (577 aa).

N-linked (GlcNAc...) asparagine glycans are attached at residues Asn-62 and Asn-84. Transmembrane regions (helical) follow at residues 104–124 (AAIA…PVAL), 151–171 (LAVT…MLGI), 189–209 (AGIG…LGLV), 241–261 (NPTM…LMMY), and 265–285 (GAVI…TTPV). N-linked (GlcNAc...) asparagine glycosylation occurs at Asn-320. A run of 5 helical transmembrane segments spans residues 328-348 (FGLA…GTLY), 373-393 (VDAI…TAFV), 413-433 (GICF…PPWA), 434-454 (TGST…EINW), and 476-496 (IADG…GVWV). Residues 555–566 (MPPNGSMSSGSP) show a composition bias toward low complexity. The tract at residues 555–577 (MPPNGSMSSGSPEQVAEKAVGKY) is disordered. N-linked (GlcNAc...) asparagine glycosylation occurs at Asn-558.

It belongs to the nucleobase:cation symporter-2 (NCS2) (TC 2.A.40) family. Azg-like subfamily.

Its subcellular location is the cell membrane. Functionally, efflux pump; part of the gene cluster that mediates the biosynthesis of notoamide, a fungal indole alkaloid that belongs to a family of natural products containing a characteristic bicyclo[2.2.2]diazaoctane core. The sequence is that of Efflux pump notK' from Aspergillus versicolor.